Here is a 111-residue protein sequence, read N- to C-terminus: Large ribosomal subunit protein uL22 (111 aa).

This sequence belongs to the universal ribosomal protein uL22 family. In terms of assembly, part of the 50S ribosomal subunit.

Its function is as follows. This protein binds specifically to 23S rRNA; its binding is stimulated by other ribosomal proteins, e.g. L4, L17, and L20. It is important during the early stages of 50S assembly. It makes multiple contacts with different domains of the 23S rRNA in the assembled 50S subunit and ribosome. Functionally, the globular domain of the protein is located near the polypeptide exit tunnel on the outside of the subunit, while an extended beta-hairpin is found that lines the wall of the exit tunnel in the center of the 70S ribosome. The chain is Large ribosomal subunit protein uL22 from Thermoanaerobacter pseudethanolicus (strain ATCC 33223 / 39E) (Clostridium thermohydrosulfuricum).